The following is a 500-amino-acid chain: Probable betaine aldehyde dehydrogenase (500 aa).

249-254 (GSLATG) contributes to the NAD(+) binding site. The active-site Proton acceptor is Glu271. Cys305 functions as the Nucleophile in the catalytic mechanism.

It belongs to the aldehyde dehydrogenase family.

It carries out the reaction betaine aldehyde + NAD(+) + H2O = glycine betaine + NADH + 2 H(+). The protein operates within amine and polyamine biosynthesis; betaine biosynthesis via choline pathway; betaine from betaine aldehyde: step 1/1. The sequence is that of Probable betaine aldehyde dehydrogenase (meu8) from Schizosaccharomyces pombe (strain 972 / ATCC 24843) (Fission yeast).